The primary structure comprises 352 residues: Molybdenum import ATP-binding protein ModC (352 aa).

The ABC transporter domain maps to 1–229 (MLQLDFHQQL…SALRPWLPKD (229 aa)). 31–38 (GVSGAGKT) contributes to the ATP binding site. One can recognise a Mop domain in the interval 289 to 352 (KSSIRNVLRA…AQIKSVSITA (64 aa)).

It belongs to the ABC transporter superfamily. Molybdate importer (TC 3.A.1.8) family. The complex is composed of two ATP-binding proteins (ModC), two transmembrane proteins (ModB) and a solute-binding protein (ModA).

Its subcellular location is the cell inner membrane. The catalysed reaction is molybdate(out) + ATP + H2O = molybdate(in) + ADP + phosphate + H(+). Functionally, part of the ABC transporter complex ModABC involved in molybdenum import. Responsible for energy coupling to the transport system. The chain is Molybdenum import ATP-binding protein ModC from Pectobacterium atrosepticum (strain SCRI 1043 / ATCC BAA-672) (Erwinia carotovora subsp. atroseptica).